Here is a 715-residue protein sequence, read N- to C-terminus: MSKAHKSWPHRRRNQFSSQRSLKKEMNFFQQQPPPFGTVPPQMTFPPNWQGVEKDPAFLTKDFNLLTLNNQPLPGNTSQPRAKGPENNLHNQYEQKVRPYIDLIDSLRALGVEQDLALPAIAVIGDQSSGKSSVLEALSGVALPRGSGIVTRCPLVLKLKKQPYKAWAGRISYQNTEIELQDPGQVEKEIHKAQNVMAGNGLGISHELISLEITSPEVPDLTIIDLPGIARVAVGNQPRDIGLQIKALIKRYIQRQQTINLVVVPCNVDIATTEALSMAHEVDPEGDRTIGILTKPDLMDRGTEKSIINVVRNLTYPLKKGYMIVKCRGQQEIINRLSLAEATKKEITFFQTHPCFRVLLEEGSATVPRLAERLTAELITHIQKSLPLLEEQIRESHQKATEELRRCGADIPSQDADKMFFLIEKIKMFNQDIEKLIEGEEVVRENETRLYNKIREDFKNWIGILATNTQKVKNIIHEEVEKYEKQYRGKELLGFVNYKTFETIVHQYIQHLVEPALSMLQKAVEIIRQAFVNMAKKHFGEFFNLNHTVQSKIEDIKVRHTEKAENMIQLQFRMEQIVFCQDQIYSVVVKKVREEIFNPLGKPSQNMKLNSHFPINESSVSSFNEIGVHLNAYFSETSTRLANQIPFIIQYFMLRENGDSLQKAMMQILQEKNRYSWLLQEQSETATKRRMLKERIYRLTQARHALCQFSSKEIH.

Basic residues predominate over residues 1 to 14 (MSKAHKSWPHRRRN). Disordered stretches follow at residues 1 to 24 (MSKAHKSWPHRRRNQFSSQRSLKK) and 69 to 88 (NNQPLPGNTSQPRAKGPENN). A compositionally biased stretch (polar residues) spans 69-80 (NNQPLPGNTSQP). One can recognise a Dynamin-type G domain in the interval 115 to 387 (DLALPAIAVI…LITHIQKSLP (273 aa)). The tract at residues 125–132 (GDQSSGKS) is G1 motif. 125–132 (GDQSSGKS) provides a ligand contact to GTP. A G2 motif region spans residues 150–152 (VTR). The tract at residues 225 to 228 (DLPG) is G3 motif. GTP contacts are provided by residues 225 to 229 (DLPGI) and 294 to 297 (TKPD). The G4 motif stretch occupies residues 294-297 (TKPD). Positions 326 to 329 (KCRG) are G5 motif. Residues 623–714 (FNEIGVHLNA…ALCQFSSKEI (92 aa)) enclose the GED domain.

It belongs to the TRAFAC class dynamin-like GTPase superfamily. Dynamin/Fzo/YdjA family.

It localises to the cytoplasm. Its subcellular location is the nucleus. Interferon-induced dynamin-like GTPase with antiviral activity. This Macaca mulatta (Rhesus macaque) protein is Interferon-induced GTP-binding protein Mx2 (MX2).